A 396-amino-acid polypeptide reads, in one-letter code: Elongation factor Tu 1 (396 aa).

Residues 10–206 (KPHINVGTIG…VLDSYIPEPQ (197 aa)) enclose the tr-type G domain. The G1 stretch occupies residues 19 to 26 (GHVDHGKT). Residue 19 to 26 (GHVDHGKT) coordinates GTP. Thr-26 serves as a coordination point for Mg(2+). The segment at 60–64 (GITIN) is G2. The tract at residues 81 to 84 (DCPG) is G3. GTP is bound by residues 81–85 (DCPGH) and 136–139 (NKAD). Residues 136-139 (NKAD) are G4. The interval 174-176 (SAL) is G5.

The protein belongs to the TRAFAC class translation factor GTPase superfamily. Classic translation factor GTPase family. EF-Tu/EF-1A subfamily. As to quaternary structure, monomer.

Its subcellular location is the cytoplasm. It carries out the reaction GTP + H2O = GDP + phosphate + H(+). In terms of biological role, GTP hydrolase that promotes the GTP-dependent binding of aminoacyl-tRNA to the A-site of ribosomes during protein biosynthesis. This chain is Elongation factor Tu 1, found in Nitrosomonas eutropha (strain DSM 101675 / C91 / Nm57).